A 590-amino-acid chain; its full sequence is L-fucose isomerase (590 aa).

Residues glutamate 337 and aspartate 361 each act as proton acceptor in the active site. Residues glutamate 337, aspartate 361, and histidine 528 each coordinate Mn(2+).

It belongs to the L-fucose isomerase family. Mn(2+) is required as a cofactor.

The protein resides in the cytoplasm. It catalyses the reaction L-fucose = L-fuculose. The protein operates within carbohydrate degradation; L-fucose degradation; L-lactaldehyde and glycerone phosphate from L-fucose: step 1/3. In terms of biological role, converts the aldose L-fucose into the corresponding ketose L-fuculose. The polypeptide is L-fucose isomerase (Bacteroides fragilis (strain ATCC 25285 / DSM 2151 / CCUG 4856 / JCM 11019 / LMG 10263 / NCTC 9343 / Onslow / VPI 2553 / EN-2)).